A 585-amino-acid chain; its full sequence is Regulatory protein BlaR1 (585 aa).

The Extracellular segment spans residues 1–4 (MAKL). A helical membrane pass occupies residues 5–22 (LIMSIVSFCFIFLLLLFF). Residues 23–31 (RYILKRYFN) lie on the Cytoplasmic side of the membrane. The helical transmembrane segment at 32 to 48 (YMLNYKVWYLTLLAGLI) threads the bilayer. Over 49-104 (PFIPIKFSLFKFNNVNNQAPTVESKSHDLNHNINTTKPIQEFATDIHKFNWDSIDN) the chain is Extracellular. A helical membrane pass occupies residues 105–122 (ISTVIWIVLVIILSFKFL). Residues 123–311 (KALLYLKYLK…NLKKQSKLIL (189 aa)) lie on the Cytoplasmic side of the membrane. A helical transmembrane segment spans residues 312–328 (IFICIFTFLLMVIQSQF). Topologically, residues 329–585 (LMGQSITDYN…LKEMGVLNGQ (257 aa)) are extracellular. Residues 331–585 (GQSITDYNYK…LKEMGVLNGQ (255 aa)) form a beta-lactam antibiotic sensor domain region. Residue serine 389 is the Acyl-ester intermediate of the active site. At lysine 392 the chain carries N6-carboxylysine.

Belongs to the peptidase M56 family. In terms of processing, carboxylation occurs on two lysine residues. Carboxylation at 'Lys-392' activates the active site serine residue for acylation. On acylation, the lysine side chain experiences a spontaneous decarboxylation that entraps the sensor in its activated state.

It is found in the cell membrane. Functionally, integral membrane protein involved in sensing of the presence of beta-lactam antibiotics and transduction of the information to the cytoplasm. Mechanistically, activation of the signal transducer involves acylation of a serine in the C-terminal sensor domain upon binding of the beta-lactam antibiotic. In turn, a conformational change occurs and the signal is transmitted from the cell surface to the cytoplasm. There, the zinc protease domain is activated and initiates autoproteolysis as well as cleavage of the transcriptional repressor BlaI leading to derepression of antibiotic resistance genes. This is Regulatory protein BlaR1 (blaR1) from Staphylococcus aureus.